We begin with the raw amino-acid sequence, 1145 residues long: Adenylate cyclase type 3 (1145 aa).

Residues 1–79 lie on the Cytoplasmic side of the membrane; the sequence is MPRNQGFSDP…FKRQRHETLL (79 aa). A run of 5 helical transmembrane segments spans residues 80–100, 105–125, 139–159, 173–193, and 226–246; these read VLVV…AVVF, LAPL…FVLC, VPYL…GLNF, AFFV…IVII, and ILAN…SYYM. Asp-324, Ile-325, and Asp-368 together coordinate Mg(2+). Residues 324 to 329 and 366 to 368 contribute to the ATP site; these read DIVGFT and LGD. A helical membrane pass occupies residues 381–401; sequence EDHAVCSILMGLAMVEAISYV. At 402–631 the chain is on the cytoplasmic side; it reads REKTKTGVDM…RYSVEKEKQS (230 aa). Arg-412 serves as a coordination point for ATP. A Glycyl lysine isopeptide (Lys-Gly) (interchain with G-Cter in SUMO3) cross-link involves residue Lys-465. Residues 504 to 564 form a disordered region; sequence QNGLNGSAVP…DNPSFPNPRR (61 aa). 2 stretches are compositionally biased toward low complexity: residues 516–526 and 535–544; these read APASSKPSSPA and GSAHASGSTS. The residue at position 524 (Ser-524) is a Phosphoserine. Ser-579 is modified (phosphoserine). The next 3 membrane-spanning stretches (helical) occupy residues 632-652, 663-683, and 707-727; these read GAAF…EILI, FVVG…AIFP, and WAML…LSCL. A glycan (N-linked (GlcNAc...) asparagine) is linked at Asn-735. The next 3 helical transmembrane spans lie at 753–773, 774–794, and 834–854; these read YNYV…VSHM, VKLT…LYAW, and LPLV…MLSF. Over 855-1145 the chain is Cytoplasmic; the sequence is YYFSRHVEKL…TLPHQVVDNP (291 aa). ATP contacts are provided by residues Lys-976, 1063–1065, and 1070–1074; these read DIW and NVASR. The residue at position 1077 (Ser-1077) is a Phosphoserine; by CaMK2. An ATP-binding site is contributed by Lys-1110.

It belongs to the adenylyl cyclase class-4/guanylyl cyclase family. The cofactor is Mg(2+). Mn(2+) serves as cofactor. Post-translationally, N-glycosylated. In terms of processing, rapidly phosphorylated after stimulation by odorants or forskolin. Phosphorylation by CaMK2 at Ser-1077 down-regulates enzyme activity. Sumoylated. Sumoylation is required for targeting of olfactory cilia. Detected in the acrosomal region of epididymal spermatozoa, the acrosomal region of round spermatids and in elongating spermatids. Detected in cilia in the olfactory epithelium (at protein level). Detected in olfactory epithelium neurons. Detected in brain, testis, late pachytene spermatocytes, round spermatids and elongating spermatids.

Its subcellular location is the cell membrane. The protein localises to the cell projection. It localises to the cilium. It is found in the golgi apparatus. The protein resides in the cytoplasm. It catalyses the reaction ATP = 3',5'-cyclic AMP + diphosphate. Its activity is regulated as follows. Specifically activated by the G alpha protein GNAL/G(olf) in signaling cascades triggered by odorant receptors. Activated by forskolin. After forskolin treatment, activity is further increased by calcium/calmodulin. In the absence of forskolin, calcium/calmodulin has little effect on enzyme activity. Its function is as follows. Catalyzes the formation of the signaling molecule cAMP in response to G-protein signaling. Participates in signaling cascades triggered by odorant receptors via its function in cAMP biosynthesis: specifically activated by G alpha protein GNAL/G(olf) in olfactory epithelium. Required for the perception of odorants. Required for normal sperm motility and normal male fertility. Plays a role in regulating insulin levels and body fat accumulation in response to a high fat diet. This is Adenylate cyclase type 3 (Adcy3) from Mus musculus (Mouse).